Reading from the N-terminus, the 261-residue chain is Pantothenate synthetase (261 aa).

29 to 36 is an ATP binding site; it reads MGALHNGH. The active-site Proton donor is the histidine 36. Glutamine 60 is a binding site for (R)-pantoate. A beta-alanine-binding site is contributed by glutamine 60. Residue 147–150 participates in ATP binding; it reads GEKD. Glutamine 153 is a binding site for (R)-pantoate. An ATP-binding site is contributed by 184–187; sequence LSSR.

Belongs to the pantothenate synthetase family. Homodimer.

The protein resides in the cytoplasm. The catalysed reaction is (R)-pantoate + beta-alanine + ATP = (R)-pantothenate + AMP + diphosphate + H(+). The protein operates within cofactor biosynthesis; (R)-pantothenate biosynthesis; (R)-pantothenate from (R)-pantoate and beta-alanine: step 1/1. Functionally, catalyzes the condensation of pantoate with beta-alanine in an ATP-dependent reaction via a pantoyl-adenylate intermediate. This chain is Pantothenate synthetase, found in Francisella tularensis subsp. holarctica (strain FTNF002-00 / FTA).